Reading from the N-terminus, the 402-residue chain is Oligopeptide transport ATP-binding protein OppD (402 aa).

An ABC transporter domain is found at 22–309 (LDITDLHVNF…PLHPYTWALI (288 aa)). 58 to 65 (GESGSGKS) contributes to the ATP binding site.

This sequence belongs to the ABC transporter superfamily. The complex is composed of two ATP-binding proteins (OppD and OppF), two transmembrane proteins (OppB and OppC) and a solute-binding protein (OppA).

Its subcellular location is the cell membrane. The enzyme catalyses a [peptide](out) + ATP + H2O = a [peptide](in) + ADP + phosphate + H(+). In terms of biological role, part of the ABC transporter complex OppABCDF involved in the uptake of oligopeptides. Probably responsible for energy coupling to the transport system. In Mycoplasma genitalium (strain ATCC 33530 / DSM 19775 / NCTC 10195 / G37) (Mycoplasmoides genitalium), this protein is Oligopeptide transport ATP-binding protein OppD (oppD).